A 178-amino-acid chain; its full sequence is Large ribosomal subunit protein uL6 (178 aa).

The protein belongs to the universal ribosomal protein uL6 family. In terms of assembly, part of the 50S ribosomal subunit.

Its function is as follows. This protein binds to the 23S rRNA, and is important in its secondary structure. It is located near the subunit interface in the base of the L7/L12 stalk, and near the tRNA binding site of the peptidyltransferase center. This Gluconobacter oxydans (strain 621H) (Gluconobacter suboxydans) protein is Large ribosomal subunit protein uL6.